The primary structure comprises 209 residues: Probable calcium-binding protein CML36 (209 aa).

The disordered stretch occupies residues 22–59; that stretch reads SKSPTAFSFGSASSSSGQDCKNSGGDGGGGSVTPTSIL. The segment covering 27 to 38 has biased composition (low complexity); that stretch reads AFSFGSASSSSG. 4 EF-hand domains span residues 66-101, 103-138, 139-174, and 176-209; these read YSYVEILQAFKLIDRDNDGAVSRHDLESLLSRLGPD, LTEEEINVMLKEVDCDGDGTIRLEELASRVVSLDPA, RDSTELKETFEFFDADRDGLISADELLRVFSTIGDE, and CTLDDCKRMIADVDEDGDGFVCFTEFSRMMDLQR. The Ca(2+) site is built by aspartate 79, aspartate 81, aspartate 83, and aspartate 90. Ca(2+) contacts are provided by aspartate 152, aspartate 154, aspartate 156, glutamate 163, aspartate 189, aspartate 191, aspartate 193, and glutamate 200.

Potential calcium sensor. The polypeptide is Probable calcium-binding protein CML36 (CML36) (Arabidopsis thaliana (Mouse-ear cress)).